A 614-amino-acid polypeptide reads, in one-letter code: Autophagy-related protein 22-1 (614 aa).

The interval 1–29 (MQNCTNSPEDQAASVCPPPPQFPGDDTRP) is disordered. Asn-3 carries N-linked (GlcNAc...) asparagine glycosylation. 4 helical membrane passes run 41-61 (YGWAAEVFTVCAMGSFLPITL), 126-146 (TASFAMYTFSLSVFIQAILII), 160-180 (MLLVIFALIGSVSTMLFLAVV), and 185-205 (LLGGLFAIISNTCFGASFVLL). Positions 229 to 254 (PTGTSHDSTSTADGPGQTDGTETTSL) are disordered. Residues 230–254 (TGTSHDSTSTADGPGQTDGTETTSL) show a composition bias toward polar residues. Transmembrane regions (helical) follow at residues 291 to 311 (GIGIGYIGAVILQAICILVVV), 322 to 342 (LVLFLIGLWWFTFTIPAAMWL), 383 to 403 (ILLFLAAWFLLSDGIATVSGT), 417 to 437 (AALGLINVIAMIAGVFGAFSW), 452 to 472 (IVACIILFELVPLYGLLGFIP), 486 to 506 (WEMYPLGVIYGLVMGGLSSYC), 523 to 545 (YALYAITDKGSSVFGPAIVGIIT), and 554 to 574 (AFVFLAVLILLPLPLMLLVDV).

This sequence belongs to the ATG22 family.

The protein localises to the vacuole membrane. In terms of biological role, vacuolar effluxer which mediate the efflux of amino acids resulting from autophagic degradation. The release of autophagic amino acids allows the maintenance of protein synthesis and viability during nitrogen starvation. This Aspergillus niger (strain ATCC MYA-4892 / CBS 513.88 / FGSC A1513) protein is Autophagy-related protein 22-1 (atg22-1).